We begin with the raw amino-acid sequence, 136 residues long: Protein NrdI (136 aa).

Belongs to the NrdI family.

Probably involved in ribonucleotide reductase function. In Erwinia tasmaniensis (strain DSM 17950 / CFBP 7177 / CIP 109463 / NCPPB 4357 / Et1/99), this protein is Protein NrdI.